Consider the following 233-residue polypeptide: DnaA regulatory inactivator Hda (233 aa).

This sequence belongs to the DnaA family. HdA subfamily. As to quaternary structure, the active form seems to be an ADP-bound monomer. Forms the RIDA complex (regulatory inactivation of DnaA) of ATP-DnaA, ADP-Hda and the DNA-loaded beta sliding clamp (dnaN).

In terms of biological role, mediates the interaction of DNA replication initiator protein DnaA with DNA polymerase subunit beta sliding clamp (dnaN). Stimulates hydrolysis of ATP-DnaA to ADP-DnaA, rendering DnaA inactive for reinitiation, a process called regulatory inhibition of DnaA or RIDA. This Shigella boydii serotype 4 (strain Sb227) protein is DnaA regulatory inactivator Hda.